We begin with the raw amino-acid sequence, 270 residues long: Tetracenomycin polyketide synthesis O-methyltransferase TcmP (270 aa).

It functions in the pathway antibiotic biosynthesis; tetracenomycin C biosynthesis. Its function is as follows. O-methyltransferase that catalyzes the methylation of the C-9 carboxy group of tetracenomycin E (TCM E) to yield TCM A2. Catalyzes as well the following side reactions: methylation of 8-O-methyl-TCM D3 to 9-carboxymethyl-8-O-methyl-TCM D3; and of TCM B3 to 9-carboxymethyl-TCM B3. The chain is Tetracenomycin polyketide synthesis O-methyltransferase TcmP (tcmP) from Streptomyces glaucescens.